The chain runs to 685 residues: DNA ligase (685 aa).

NAD(+)-binding positions include 47–51 (DSEYD), 96–97 (SL), and glutamate 125. Lysine 127 (N6-AMP-lysine intermediate) is an active-site residue. NAD(+)-binding residues include arginine 148, glutamate 185, lysine 304, and lysine 328. Positions 422, 425, 440, and 446 each coordinate Zn(2+). Positions 605–685 (ADAQPLKGQT…ELLALLAANA (81 aa)) constitute a BRCT domain.

Belongs to the NAD-dependent DNA ligase family. LigA subfamily. The cofactor is Mg(2+). It depends on Mn(2+) as a cofactor.

The catalysed reaction is NAD(+) + (deoxyribonucleotide)n-3'-hydroxyl + 5'-phospho-(deoxyribonucleotide)m = (deoxyribonucleotide)n+m + AMP + beta-nicotinamide D-nucleotide.. Its function is as follows. DNA ligase that catalyzes the formation of phosphodiester linkages between 5'-phosphoryl and 3'-hydroxyl groups in double-stranded DNA using NAD as a coenzyme and as the energy source for the reaction. It is essential for DNA replication and repair of damaged DNA. The protein is DNA ligase of Shewanella baltica (strain OS195).